Reading from the N-terminus, the 402-residue chain is Probable sugar efflux transporter (402 aa).

A run of 12 helical transmembrane segments spans residues 15–35 (VLIM…PVAM), 51–71 (GLMM…AMLA), 84–104 (LFII…FWIL), 109–129 (MCIA…VMRI), 137–157 (QALG…LPIG), 168–188 (VTFG…IRLL), 209–229 (PLLL…FTAY), 245–265 (NFAT…SLLF), 276–296 (FIVV…FSTE), 297–317 (AIIA…CIGL), 333–353 (VATA…ALFG), and 365–385 (IGYT…TTHL).

This sequence belongs to the major facilitator superfamily. SotB (TC 2.A.1.2) family.

It localises to the cell inner membrane. Its function is as follows. Involved in the efflux of sugars. The physiological role may be the reduction of the intracellular concentration of toxic sugars or sugar metabolites. This Haemophilus influenzae (strain 86-028NP) protein is Probable sugar efflux transporter.